The sequence spans 385 residues: Endoglucanase 1 (385 aa).

The N-terminal stretch at 1–17 (MKLVFSALASLLSGASA) is a signal peptide. Residues asparagine 93 and asparagine 140 are each glycosylated (N-linked (GlcNAc...) asparagine). Glutamate 176 (proton donor) is an active-site residue. N-linked (GlcNAc...) asparagine glycans are attached at residues asparagine 200 and asparagine 237. The active-site Nucleophile is glutamate 284. Asparagine 289 and asparagine 331 each carry an N-linked (GlcNAc...) asparagine glycan.

Belongs to the glycosyl hydrolase 5 (cellulase A) family.

It catalyses the reaction Endohydrolysis of (1-&gt;4)-beta-D-glucosidic linkages in cellulose, lichenin and cereal beta-D-glucans.. It participates in glycan metabolism; cellulose degradation. In terms of biological role, active towards carboxymethyl cellulose. The protein is Endoglucanase 1 (eg 1) of Robillarda sp. (strain Y-20).